The sequence spans 324 residues: MHLPSLVLGLLGLGLTASASPIEERSNRSKAPDGCLTVGSSGKYSTIGAALDALGDSKSDACIFIGAGTYKEQITIDYKGKLTMYGETTDTSSYKKNQVTITHTISSPQAGTLDKSATVNVRSDGFKMYNINVINGYGKGSQAVALVANADKLGFYGCSFVGYQDTLYAKAGRQYYSNCYIEGATDYIFGNASAWFGECDIMSVGPGYITAMSRTTADQTTWYAIDNCNIYGKPGVDLTAKVYLGRPWRVLARVIYQNSQLSNIINPKGWTTMAEGATPLYYEYNNKGAGADTSKREYESSISGAVSMNTVLGSGWNSWIDTTY.

The first 19 residues, 1 to 19, serve as a signal peptide directing secretion; sequence MHLPSLVLGLLGLGLTASA. A glycan (N-linked (GlcNAc...) asparagine) is linked at N27. Q142 is a substrate binding site. D165 functions as the Proton donor in the catalytic mechanism. Catalysis depends on D186, which acts as the Nucleophile. A glycan (N-linked (GlcNAc...) asparagine) is linked at N191. Positions 246 and 248 each coordinate substrate.

This sequence belongs to the pectinesterase family.

It localises to the secreted. The enzyme catalyses [(1-&gt;4)-alpha-D-galacturonosyl methyl ester](n) + n H2O = [(1-&gt;4)-alpha-D-galacturonosyl](n) + n methanol + n H(+). It functions in the pathway glycan metabolism; pectin degradation; 2-dehydro-3-deoxy-D-gluconate from pectin: step 1/5. Functionally, involved in maceration and soft-rotting of plant tissue. The sequence is that of Probable pectinesterase A (pmeA) from Neosartorya fischeri (strain ATCC 1020 / DSM 3700 / CBS 544.65 / FGSC A1164 / JCM 1740 / NRRL 181 / WB 181) (Aspergillus fischerianus).